Consider the following 794-residue polypeptide: Kinesin-like protein KIN-13A (794 aa).

One can recognise a Kinesin motor domain in the interval 193-526; it reads KIKVVVRKRP…LRYADRVKSL (334 aa). 282–289 serves as a coordination point for ATP; sequence GQTGSGKT. Residues 525–699 form a disordered region; that stretch reads SLSKSGNSKK…YETASRQYET (175 aa). Over residues 569–579 the composition is skewed to basic and acidic residues; sequence ETRRRVVEKDS. Polar residues-rich tracts occupy residues 580-593 and 611-632; these read NSST…QPTN and EPNS…YPQE. A compositionally biased stretch (basic and acidic residues) spans 650–668; that stretch reads GLREEKPDRPQNWSKRDVS. The span at 669–696 shows a compositional bias: polar residues; sequence SSDIPTLTNFRQNASETASRQYETASRQ. Residues 705 to 742 are a coiled coil; that stretch reads ENLDALLEEEEALIAAHRKEIEDTMEIVREEMKLLAEV.

This sequence belongs to the TRAFAC class myosin-kinesin ATPase superfamily. Kinesin family. KIN-13 subfamily. In terms of assembly, component of the active ARAC10-IRC5-KIN13A complex. Interacts (via-C-terminus) with ICR2 and ICR5 (via N-terminus). No interactions with ICR1. As to expression, expressed in leaves, roots, young and mature seedlings. Preferentially expressed in the secondary cell wall pits of differentiating metaxylem vessel cells (at the protein level).

It localises to the golgi apparatus. Its subcellular location is the golgi stack. It is found in the cytoplasm. The protein resides in the cytoskeleton. Internal motor kinesin involved in trichome morphogenesis. Participates in regulating the formation of Golgi-associated vesicles. Plays a central role in microtubule disassembly via the active ARAC10-ICR5 cascade, which establishes the secondary cell wall pattern in metaxylem vessel cells. Acts redundantly with KIN13B to modulate cell wall synthesis and cell expansion via the THE1 pathway. The sequence is that of Kinesin-like protein KIN-13A from Arabidopsis thaliana (Mouse-ear cress).